The chain runs to 267 residues: Protein isy-1 (267 aa).

The stretch at 175 to 204 (LEKLIEEKNIERINKEFAEKQAQKQQTASD) forms a coiled coil. The segment at 195 to 221 (QAQKQQTASDAAPENIYKVEEDDDDDL) is disordered.

The protein belongs to the ISY1 family. Ubiquitously expressed.

Its subcellular location is the nucleus. In terms of biological role, regulates the processing of the mir-60 microRNA (miRNA), which in turn negatively regulates the expression of the transcription factor zip-10. Does not affect the splicing of zip-10. This is Protein isy-1 from Caenorhabditis elegans.